Consider the following 843-residue polypeptide: Protein P (843 aa).

Residues 1–177 (MPLSYQHFRK…FCGSPYSWEQ (177 aa)) are terminal protein domain (TP). A spacer region spans residues 178-346 (DLQHGRLVFQ…YCLYHIVNLI (169 aa)). The segment at 219–250 (RKSRLGPQPAQGQLAGRQQGGSGSIRARVHPS) is disordered. A compositionally biased stretch (low complexity) spans 223–235 (LGPQPAQGQLAGR). The segment at 347-690 (EDWGPCTEHG…YLNLYPVARQ (344 aa)) is polymerase/reverse transcriptase domain (RT). A Reverse transcriptase domain is found at 357–600 (EHRIRTPRTP…YSLNFMGYVI (244 aa)). The Mg(2+) site is built by Asp429, Asp551, and Asp552.

It belongs to the hepadnaviridae P protein family.

The catalysed reaction is DNA(n) + a 2'-deoxyribonucleoside 5'-triphosphate = DNA(n+1) + diphosphate. It carries out the reaction Endonucleolytic cleavage to 5'-phosphomonoester.. Its activity is regulated as follows. Activated by host HSP70 and HSP40 in vitro to be able to bind the epsilon loop of the pgRNA. Because deletion of the RNase H region renders the protein partly chaperone-independent, the chaperones may be needed indirectly to relieve occlusion of the RNA-binding site by this domain. Inhibited by several reverse-transcriptase inhibitors: Lamivudine, Adefovir and Entecavir. Multifunctional enzyme that converts the viral RNA genome into dsDNA in viral cytoplasmic capsids. This enzyme displays a DNA polymerase activity that can copy either DNA or RNA templates, and a ribonuclease H (RNase H) activity that cleaves the RNA strand of RNA-DNA heteroduplexes in a partially processive 3'- to 5'-endonucleasic mode. Neo-synthesized pregenomic RNA (pgRNA) are encapsidated together with the P protein, and reverse-transcribed inside the nucleocapsid. Initiation of reverse-transcription occurs first by binding the epsilon loop on the pgRNA genome, and is initiated by protein priming, thereby the 5'-end of (-)DNA is covalently linked to P protein. Partial (+)DNA is synthesized from the (-)DNA template and generates the relaxed circular DNA (RC-DNA) genome. After budding and infection, the RC-DNA migrates in the nucleus, and is converted into a plasmid-like covalently closed circular DNA (cccDNA). The activity of P protein does not seem to be necessary for cccDNA generation, and is presumably released from (+)DNA by host nuclear DNA repair machinery. The chain is Protein P from Hepatitis B virus genotype B2 (isolate Vietnam/16091/1992) (HBV-B).